The primary structure comprises 101 residues: Small ribosomal subunit protein uS14 (101 aa).

The tract at residues 1–21 is disordered; it reads MAKVSLIKKNESRKKKSQSLH. Residues 11 to 21 are compositionally biased toward basic residues; that stretch reads ESRKKKSQSLH.

This sequence belongs to the universal ribosomal protein uS14 family. In terms of assembly, part of the 30S ribosomal subunit. Contacts proteins S3 and S10.

Functionally, binds 16S rRNA, required for the assembly of 30S particles and may also be responsible for determining the conformation of the 16S rRNA at the A site. In Rickettsia canadensis (strain McKiel), this protein is Small ribosomal subunit protein uS14.